We begin with the raw amino-acid sequence, 329 residues long: Protein-arginine N-acetylglucosaminyltransferase NleB1 (329 aa).

Residue arginine 13 is glycosylated (N-beta-linked (GlcNAc) arginine; by autocatalysis). 48 to 50 (QWF) provides a ligand contact to UDP-N-acetyl-alpha-D-glucosamine. Arginine 53 is a glycosylation site (N-beta-linked (GlcNAc) arginine; by autocatalysis). Tyrosine 72 lines the UDP-N-acetyl-alpha-D-glucosamine pocket. Residue arginine 159 is glycosylated (N-beta-linked (GlcNAc) arginine; by autocatalysis). 219–222 (YLDA) provides a ligand contact to UDP-N-acetyl-alpha-D-glucosamine. The short motif at 221–223 (DAD) is the DXD motif element. Position 223 (aspartate 223) interacts with Mn(2+). The active-site Proton acceptor is the glutamate 253. Arginine 293 is a glycosylation site (N-beta-linked (GlcNAc) arginine; by autocatalysis). Mn(2+)-binding residues include asparagine 320 and serine 322. UDP-N-acetyl-alpha-D-glucosamine is bound by residues serine 322 and 327–329 (SSW).

This sequence belongs to the glycosyltransferase NleB family. Mn(2+) serves as cofactor. In terms of processing, auto-glycosylated: arginine GlcNAcylation is required for activity toward death domain-containing host target proteins.

The protein resides in the secreted. It localises to the host cytoplasm. It catalyses the reaction L-arginyl-[protein] + UDP-N-acetyl-alpha-D-glucosamine = N(omega)-(N-acetyl-beta-D-glucosaminyl)-L-arginyl-[protein] + UDP + H(+). In terms of biological role, protein-arginine N-acetylglucosaminyltransferase effector that disrupts TNF signaling in infected cells, including NF-kappa-B signaling, apoptosis and necroptosis. Acts by catalyzing the transfer of a single N-acetylglucosamine (GlcNAc) to a conserved arginine residue in the death domain of host proteins FADD, TRADD, FAS, TNFRSF1A/TNFR1, TNFRSF25/DR3 and RIPK1: arginine GlcNAcylation prevents homotypic/heterotypic death domain interactions and assembly of the oligomeric TNF-alpha receptor complex, thereby disrupting TNF signaling. Has preference for host FADD as substrate compared to other death domain-containing proteins. Also acts on host proteins without a death domain: catalyzes arginine GlcNAcylation of HIF1A, thereby regulating host glucose metabolism. Also displays intra-bacterial activity by mediating GlcNAcylation of glutathione synthetase GshB. Catalyzes auto-GlcNAcylation, which is required for activity toward death domain-containing host target proteins. Shows a higher enzymatic activity than NleB2. In Escherichia coli O127:H6 (strain E2348/69 / EPEC), this protein is Protein-arginine N-acetylglucosaminyltransferase NleB1.